The primary structure comprises 49 residues: MRVQITLACTETGDKNYITTKNKRNNPERLELKKYSPRLKRTTLHRETK.

The tract at residues I18–K49 is disordered. Positions N25–K34 are enriched in basic and acidic residues.

The protein belongs to the bacterial ribosomal protein bL33 family.

The chain is Large ribosomal subunit protein bL33 from Lysinibacillus sphaericus (strain C3-41).